A 161-amino-acid polypeptide reads, in one-letter code: Lipoprotein signal peptidase (161 aa).

Helical transmembrane passes span 6–26 (ILFLITAGLVLLLDQFTKFYV), 67–87 (GLFFTSVTLIAAGLILFYLIK), and 90–110 (VSDLMMVIPLALVLAGAMGNL). Catalysis depends on residues Asp-121 and Asp-139. The chain crosses the membrane as a helical span at residues 134 to 154 (AFNIADTAISIGVLFLVVDMI).

The protein belongs to the peptidase A8 family.

Its subcellular location is the cell inner membrane. The catalysed reaction is Release of signal peptides from bacterial membrane prolipoproteins. Hydrolyzes -Xaa-Yaa-Zaa-|-(S,diacylglyceryl)Cys-, in which Xaa is hydrophobic (preferably Leu), and Yaa (Ala or Ser) and Zaa (Gly or Ala) have small, neutral side chains.. Its pathway is protein modification; lipoprotein biosynthesis (signal peptide cleavage). This protein specifically catalyzes the removal of signal peptides from prolipoproteins. This Syntrophus aciditrophicus (strain SB) protein is Lipoprotein signal peptidase.